We begin with the raw amino-acid sequence, 225 residues long: Protein-L-isoaspartate O-methyltransferase (225 aa).

S-adenosyl-L-homocysteine is bound by residues 57–60 (ATVS), H65, S89, 110–111 (EH), 142–143 (DG), T216, and Q221. S60 is a catalytic residue.

This sequence belongs to the methyltransferase superfamily. L-isoaspartyl/D-aspartyl protein methyltransferase family. In terms of assembly, monomer.

The protein resides in the cytoplasm. It is found in the cytosol. It catalyses the reaction [protein]-L-isoaspartate + S-adenosyl-L-methionine = [protein]-L-isoaspartate alpha-methyl ester + S-adenosyl-L-homocysteine. Functionally, initiates the repair of damaged proteins by catalyzing methyl esterification of L-isoaspartyl and D-aspartyl residues produced by spontaneous isomerization and racemization of L-aspartyl and L-asparaginyl residues in aging peptides and proteins. In Caenorhabditis elegans, this protein is Protein-L-isoaspartate O-methyltransferase (pcm-1).